The chain runs to 330 residues: Glycerol-3-phosphate dehydrogenase [NAD(P)+] (330 aa).

4 residues coordinate NADPH: Ser-10, Trp-11, Arg-31, and Lys-105. Sn-glycerol 3-phosphate contacts are provided by Lys-105, Gly-135, and Ser-137. Ala-139 contributes to the NADPH binding site. Sn-glycerol 3-phosphate-binding residues include Lys-190, Asp-243, Ser-253, Arg-254, and Asn-255. Lys-190 functions as the Proton acceptor in the catalytic mechanism. Residue Arg-254 coordinates NADPH. Val-278 and Glu-280 together coordinate NADPH.

This sequence belongs to the NAD-dependent glycerol-3-phosphate dehydrogenase family.

It is found in the cytoplasm. The catalysed reaction is sn-glycerol 3-phosphate + NAD(+) = dihydroxyacetone phosphate + NADH + H(+). It carries out the reaction sn-glycerol 3-phosphate + NADP(+) = dihydroxyacetone phosphate + NADPH + H(+). It functions in the pathway membrane lipid metabolism; glycerophospholipid metabolism. In terms of biological role, catalyzes the reduction of the glycolytic intermediate dihydroxyacetone phosphate (DHAP) to sn-glycerol 3-phosphate (G3P), the key precursor for phospholipid synthesis. This chain is Glycerol-3-phosphate dehydrogenase [NAD(P)+], found in Nitratidesulfovibrio vulgaris (strain ATCC 29579 / DSM 644 / CCUG 34227 / NCIMB 8303 / VKM B-1760 / Hildenborough) (Desulfovibrio vulgaris).